Reading from the N-terminus, the 665-residue chain is MAHEMIGTQIVTERLVALLESGTEKVLLIDSRPFVEYNTSHILEAININCSKLMKRRLQQDKVLITELIQHSAKHKVDIDCSQKVVVYDQSSQDVASLSSDCFLTVLLGKLEKSFNSVHLLAGGFAEFSRCFPGLCEGKSTLVPTCISQPCLPVANIGPTRILPNLYLGCQRDVLNKELMQQNGIGYVLNASNTCPKPDFIPESHFLRVPVNDSFCEKILPWLDKSVDFIEKAKASNGCVLVHCLAGISRSATIAIAYIMKRMDMSLDEAYRFVKEKRPTISPNFNFLGQLLDYEKKIKNQTGASGPKSKLKLLHLEKPNEPVPAVSEGGQKSETPLSPPCADSATSEAAGQRPVHPASVPSVPSVQPSLLEDSPLVQALSGLHLSADRLEDSNKLKRSFSLDIKSVSYSASMAASLHGFSSSEDALEYYKPSTTLDGTNKLCQFSPVQELSEQTPETSPDKEEASIPKKLQTARPSDSQSKRLHSVRTSSSGTAQRSLLSPLHRSGSVEDNYHTSFLFGLSTSQQHLTKSAGLGLKGWHSDILAPQTSTPSLTSSWYFATESSHFYSASAIYGGSASYSAYSCSQLPTCGDQVYSVRRRQKPSDRADSRRSWHEESPFEKQFKRRSCQMEFGESIMSENRSREELGKVGSQSSFSGSMEIIEVS.

The 116-residue stretch at 22 to 137 (GTEKVLLIDS…FSRCFPGLCE (116 aa)) folds into the Rhodanese domain. A (Microbial infection) N6-acetyllysine; by EIS modification is found at K55. In terms of domain architecture, Tyrosine-protein phosphatase spans 158-300 (GPTRILPNLY…LLDYEKKIKN (143 aa)). C244 functions as the Phosphocysteine intermediate in the catalytic mechanism. The tract at residues 321 to 368 (EPVPAVSEGGQKSETPLSPPCADSATSEAAGQRPVHPASVPSVPSVQP) is disordered. Positions 354 to 368 (PVHPASVPSVPSVQP) are enriched in low complexity. S446 is modified (phosphoserine; by MAPK1). Composition is skewed to polar residues over residues 449 to 458 (QELSEQTPET) and 487 to 499 (VRTSSSGTAQRSL). 2 disordered regions span residues 449-505 (QELS…PLHR) and 597-665 (VRRR…IEVS). S501 bears the Phosphoserine mark. The span at 602-622 (KPSDRADSRRSWHEESPFEKQ) shows a compositional bias: basic and acidic residues.

This sequence belongs to the protein-tyrosine phosphatase family. Non-receptor class dual specificity subfamily. In terms of assembly, interacts with ARRB2. In terms of processing, phosphorylated at Ser-446 by MAPK1/ERK2, which prevents its degradation, and thereby stabilizes it and blocks JNK MAPK activity. (Microbial infection) Acetylated at Lys-55 by the M.tuberculosis Eis protein; this leads to the inhibition of JNK-dependent autophagy, phagosome maturation, and ROS (reactive oxygen species) generation for enhanced intracellular survival of M.tuberculosis.

It localises to the cytoplasm. Its subcellular location is the nucleus. The protein resides in the cytoplasmic vesicle. It catalyses the reaction O-phospho-L-tyrosyl-[protein] + H2O = L-tyrosyl-[protein] + phosphate. The catalysed reaction is O-phospho-L-seryl-[protein] + H2O = L-seryl-[protein] + phosphate. The enzyme catalyses O-phospho-L-threonyl-[protein] + H2O = L-threonyl-[protein] + phosphate. In terms of biological role, dual specificity protein phosphatase involved in the inactivation of MAP kinases. Dephosphorylates MAPK10 bound to ARRB2. The sequence is that of Dual specificity protein phosphatase 16 (DUSP16) from Homo sapiens (Human).